The chain runs to 608 residues: Glutamine--fructose-6-phosphate aminotransferase [isomerizing] (608 aa).

The active-site Nucleophile; for GATase activity is the C2. Residues 2-217 form the Glutamine amidotransferase type-2 domain; it reads CGIVGIVGNQ…DGDWAVIGKT (216 aa). 2 consecutive SIS domains span residues 281-422 and 456-598; these read ISDA…ARGT and LSRE…VDQP. The active-site For Fru-6P isomerization activity is the K603.

The protein resides in the cytoplasm. It carries out the reaction D-fructose 6-phosphate + L-glutamine = D-glucosamine 6-phosphate + L-glutamate. Its function is as follows. Involved in the production of the root hair deformation (HAD) factor specifically on medicago. This chain is Glutamine--fructose-6-phosphate aminotransferase [isomerizing] (nodM), found in Rhizobium meliloti (strain 1021) (Ensifer meliloti).